Reading from the N-terminus, the 421-residue chain is MSDNRHQNLAVIGHVDHGKSTMVGRLLYETGSVPEHVIEQHKEEAEEKGKGGFEFAYVMDNLAEERERGVTIDIAHQEFTTDEYEFTIVDCPGHRDFVKNMITGASQADNAVLVVAADDGVAPQTREHVFLSRTLGIDELIVAVNKMDVVDYDESKYNEVVSGVKDLFGQVGFNPDDAKFIATSAFEGDNVSDHSDNTPWYDGPTLLEALNGLPVPQPPTDADLRLPIQDVYTISGIGTVPVGRIETGVMNTGDNVSFQPSDVGGEVKTIEMHHEEVPNAEPGDNVGFNVRGIGKDDIRRGDVCGPADDPPSVADTFQAQVVVMQHPSVITAGYTPVFHAHTAQVACTIESIDKKMDPASGETQEENPDFIQSGDAAVVTVRPQKPLSLEPSSEIPELGSFAVRDMGQTIAAGKVLDVDEA.

Positions 4 to 220 constitute a tr-type G domain; sequence NRHQNLAVIG…NGLPVPQPPT (217 aa). The tract at residues 13–20 is G1; sequence GHVDHGKS. Position 13–20 (13–20) interacts with GTP; that stretch reads GHVDHGKS. Residue Ser-20 participates in Mg(2+) binding. The interval 69–73 is G2; the sequence is GVTID. The interval 90–93 is G3; that stretch reads DCPG. GTP contacts are provided by residues 90–94 and 145–148; these read DCPGH and NKMD. The segment at 145 to 148 is G4; it reads NKMD. Residues 184 to 186 are G5; that stretch reads SAF.

This sequence belongs to the TRAFAC class translation factor GTPase superfamily. Classic translation factor GTPase family. EF-Tu/EF-1A subfamily.

The protein localises to the cytoplasm. The catalysed reaction is GTP + H2O = GDP + phosphate + H(+). Functionally, GTP hydrolase that promotes the GTP-dependent binding of aminoacyl-tRNA to the A-site of ribosomes during protein biosynthesis. The polypeptide is Elongation factor 1-alpha (Halobacterium salinarum (strain ATCC 700922 / JCM 11081 / NRC-1) (Halobacterium halobium)).